Consider the following 476-residue polypeptide: Aspartyl/glutamyl-tRNA(Asn/Gln) amidotransferase subunit B (476 aa).

Belongs to the GatB/GatE family. GatB subfamily. Heterotrimer of A, B and C subunits.

The enzyme catalyses L-glutamyl-tRNA(Gln) + L-glutamine + ATP + H2O = L-glutaminyl-tRNA(Gln) + L-glutamate + ADP + phosphate + H(+). It carries out the reaction L-aspartyl-tRNA(Asn) + L-glutamine + ATP + H2O = L-asparaginyl-tRNA(Asn) + L-glutamate + ADP + phosphate + 2 H(+). Functionally, allows the formation of correctly charged Asn-tRNA(Asn) or Gln-tRNA(Gln) through the transamidation of misacylated Asp-tRNA(Asn) or Glu-tRNA(Gln) in organisms which lack either or both of asparaginyl-tRNA or glutaminyl-tRNA synthetases. The reaction takes place in the presence of glutamine and ATP through an activated phospho-Asp-tRNA(Asn) or phospho-Glu-tRNA(Gln). This is Aspartyl/glutamyl-tRNA(Asn/Gln) amidotransferase subunit B from Listeria monocytogenes serotype 4b (strain CLIP80459).